A 293-amino-acid chain; its full sequence is uncharacterized protein (293 aa).

Glu47 is an active-site residue.

The protein belongs to the PhzF family.

This is an uncharacterized protein from Bacillus subtilis (strain 168).